The sequence spans 314 residues: Nitrilase 2 (314 aa).

Residues Val-7–Thr-269 form the CN hydrolase domain. Glu-47 serves as the catalytic Proton acceptor. Lys-132 acts as the Proton donor in catalysis. Cys-166 (nucleophile) is an active-site residue.

This sequence belongs to the carbon-nitrogen hydrolase superfamily. Nitrilase family.

It carries out the reaction a nitrile + 2 H2O = a carboxylate + NH4(+). In terms of biological role, nitrilases catalyze the mild hydrolytic conversion of organonitriles directly to the corresponding carboxylic acids. Catalyzes the production of aryllactic acid derivatives. Mediates the hydrolysis of cyanohydrin to (S)-phenyllactic acid. In Unknown prokaryotic organism, this protein is Nitrilase 2.